Here is a 201-residue protein sequence, read N- to C-terminus: Imidazoleglycerol-phosphate dehydratase (201 aa).

This sequence belongs to the imidazoleglycerol-phosphate dehydratase family.

The protein resides in the cytoplasm. It catalyses the reaction D-erythro-1-(imidazol-4-yl)glycerol 3-phosphate = 3-(imidazol-4-yl)-2-oxopropyl phosphate + H2O. It participates in amino-acid biosynthesis; L-histidine biosynthesis; L-histidine from 5-phospho-alpha-D-ribose 1-diphosphate: step 6/9. This chain is Imidazoleglycerol-phosphate dehydratase, found in Synechococcus sp. (strain CC9311).